Reading from the N-terminus, the 161-residue chain is Nucleotide-binding protein Aave_1854 (161 aa).

It belongs to the YajQ family.

Its function is as follows. Nucleotide-binding protein. This is Nucleotide-binding protein Aave_1854 from Paracidovorax citrulli (strain AAC00-1) (Acidovorax citrulli).